The following is a 143-amino-acid chain: Large-conductance mechanosensitive channel (143 aa).

3 consecutive transmembrane segments (helical) span residues 16–36 (VMDL…TNSL), 40–60 (IIMP…NMFI), and 87–107 (GSFI…FMMV).

The protein belongs to the MscL family. In terms of assembly, homopentamer.

The protein localises to the cell inner membrane. Channel that opens in response to stretch forces in the membrane lipid bilayer. May participate in the regulation of osmotic pressure changes within the cell. This Psychrobacter sp. (strain PRwf-1) protein is Large-conductance mechanosensitive channel.